Consider the following 501-residue polypeptide: tRNA (guanine(37)-N(1))-methyltransferase (501 aa).

Residues His282, Asp320–Leu321, Asp348–Gly349, and Asn380 each bind S-adenosyl-L-methionine. The interval Leu474–Ser501 is disordered.

It belongs to the class I-like SAM-binding methyltransferase superfamily. TRM5/TYW2 family. As to quaternary structure, monomer.

The protein localises to the mitochondrion matrix. The protein resides in the nucleus. Its subcellular location is the cytoplasm. It catalyses the reaction guanosine(37) in tRNA + S-adenosyl-L-methionine = N(1)-methylguanosine(37) in tRNA + S-adenosyl-L-homocysteine + H(+). In terms of biological role, involved in mitochondrial tRNA methylation. Specifically methylates the N1 position of guanosine-37 in various tRNAs. Methylation is not dependent on the nature of the nucleoside 5' of the target nucleoside. This is the first step in the biosynthesis of wybutosine (yW), a modified base adjacent to the anticodon of tRNAs and required for accurate decoding. This Mus musculus (Mouse) protein is tRNA (guanine(37)-N(1))-methyltransferase (Trmt5).